A 430-amino-acid polypeptide reads, in one-letter code: MTQLQSLRGMVDLLPQALQRWQAVESVARTHFQRSGFGEIRTPVMEPTDLFCRGIGEATDVVGKEMYTFNDRGDRSCTLRPEGTASVVRAALQHGLLSQGPQKLWYAGPMFRYERPQAGRQRQFHQIGVEWLGAASARADVEVIALAWDLLASLGVGGLELELNSLGSTDDRCAYRTALVAWLEQRSNLLDEDSRARLNTNPLRILDSKNKATQALLDGAPTLANSLAPESRERFEVVQQGLASLGIPFRLSPRLVRGLDYYCHTAFEITSDQLGAQATVCGGGRYNGLIGQLGGPDTPAVGWALGMERLLLVVEAAANADPDGDSARLTAVVPPNAYLVNRGEQAEKAALILARSLRCAGLVIELDNSGASFSKQFKRADRCGARWALVLGDEEVEKGEVRIKPLSDESDDFFLGLHDLTGLLAKLTAM.

The protein belongs to the class-II aminoacyl-tRNA synthetase family. As to quaternary structure, homodimer.

It is found in the cytoplasm. The enzyme catalyses tRNA(His) + L-histidine + ATP = L-histidyl-tRNA(His) + AMP + diphosphate + H(+). This chain is Histidine--tRNA ligase, found in Synechococcus sp. (strain CC9902).